Consider the following 262-residue polypeptide: Putative hydro-lyase ROP_32680 (262 aa).

This sequence belongs to the D-glutamate cyclase family.

The polypeptide is Putative hydro-lyase ROP_32680 (Rhodococcus opacus (strain B4)).